The following is a 292-amino-acid chain: Phosphotriesterase homology protein (292 aa).

The Zn(2+) site is built by His12, His14, and Glu125. Beta-D-glucose is bound at residue 148–149; it reads HN. Position 158 (His158) interacts with Zn(2+). Beta-D-glucose contacts are provided by Gly176, Asp178, and Arg181. 2 residues coordinate Zn(2+): His186 and Asp243. Beta-D-glucose-binding residues include Asp280 and Arg284.

This sequence belongs to the metallo-dependent hydrolases superfamily. Phosphotriesterase family. Monomer. It depends on Zn(2+) as a cofactor.

Activity is higher in the enzyme containing Mn(2+) than that containing Zn(2+). Catalyzes the hydrolysis of phosphorylated glyceryl acetates in which the presence of a phosphate group is required for the enzymatic hydrolysis. Hydrolyzes a dibutyl glycerol derivative suggesting it acts on phosphoglycerol substrates with a butyrate leaving group. Also active with aromatic acetates and propionates. No activity with various sugar phosphates, with various nitrophenylphosphate or nitrophenylphosphonate derivatives, or with phosphorylated or non-phosphorylated sugar lactones tested. Does not hydrolyze non-phosphorylated carboxyesters with long chain leaving groups. No general esterase, aminopeptidase, sulfatase, phosphatase, carbonic anhydrase, phosphodiesterase, and phosphotriesterase activities detected when tested with the following non-specific substrates: p-nitrophenyl acetate, L-alanine nitroanilide, p-nitrophenyl sulfate, bis(p-nitrophenyl) phosphate, paraoxon, and p-nitrophenyl phosphate. The polypeptide is Phosphotriesterase homology protein (Escherichia coli (strain K12)).